The sequence spans 234 residues: AA9 family lytic polysaccharide monooxygenase D (234 aa).

The N-terminal stretch at 1-18 (MRIEKLLNAALLAGAVSA) is a signal peptide. Residues His-19 and His-95 each contribute to the Cu(2+) site. Cys-57 and Cys-182 are disulfide-bonded. His-168 and Gln-177 together coordinate O2. Cu(2+) is bound at residue Tyr-179.

The protein belongs to the polysaccharide monooxygenase AA9 family. Cu(2+) is required as a cofactor.

It localises to the secreted. It catalyses the reaction [(1-&gt;4)-beta-D-glucosyl]n+m + reduced acceptor + O2 = 4-dehydro-beta-D-glucosyl-[(1-&gt;4)-beta-D-glucosyl]n-1 + [(1-&gt;4)-beta-D-glucosyl]m + acceptor + H2O.. Lytic polysaccharide monooxygenase (LPMO) that depolymerizes crystalline and amorphous polysaccharides via the oxidation of scissile alpha- or beta-(1-4)-glycosidic bonds, yielding C1 or C4 oxidation products. Catalysis by LPMOs requires the reduction of the active-site copper from Cu(II) to Cu(I) by a reducing agent and H(2)O(2) or O(2) as a cosubstrate. The sequence is that of AA9 family lytic polysaccharide monooxygenase D from Malbranchea cinnamomea (Thermophilic fungus).